Here is a 201-residue protein sequence, read N- to C-terminus: Recombination protein RecR (201 aa).

Residues 60-75 form a C4-type zinc finger; sequence CKRCGSYAETEICEIC. A Toprim domain is found at 83-178; it reads HTFCVVEQPE…NVTRIAYGIT (96 aa).

It belongs to the RecR family.

Its function is as follows. May play a role in DNA repair. It seems to be involved in an RecBC-independent recombinational process of DNA repair. It may act with RecF and RecO. This Leptospira interrogans serogroup Icterohaemorrhagiae serovar copenhageni (strain Fiocruz L1-130) protein is Recombination protein RecR.